The following is a 428-amino-acid chain: Serine--tRNA ligase (428 aa).

Residue 231–233 (TAE) coordinates L-serine. 262 to 264 (RSE) lines the ATP pocket. Residue glutamate 285 coordinates L-serine. Position 349-352 (349-352 (EISS)) interacts with ATP. Serine 385 is a binding site for L-serine.

It belongs to the class-II aminoacyl-tRNA synthetase family. Type-1 seryl-tRNA synthetase subfamily. In terms of assembly, homodimer. The tRNA molecule binds across the dimer.

It localises to the cytoplasm. The enzyme catalyses tRNA(Ser) + L-serine + ATP = L-seryl-tRNA(Ser) + AMP + diphosphate + H(+). The catalysed reaction is tRNA(Sec) + L-serine + ATP = L-seryl-tRNA(Sec) + AMP + diphosphate + H(+). It functions in the pathway aminoacyl-tRNA biosynthesis; selenocysteinyl-tRNA(Sec) biosynthesis; L-seryl-tRNA(Sec) from L-serine and tRNA(Sec): step 1/1. Its function is as follows. Catalyzes the attachment of serine to tRNA(Ser). Is also able to aminoacylate tRNA(Sec) with serine, to form the misacylated tRNA L-seryl-tRNA(Sec), which will be further converted into selenocysteinyl-tRNA(Sec). In Staphylococcus haemolyticus (strain JCSC1435), this protein is Serine--tRNA ligase.